Consider the following 320-residue polypeptide: Ferrochelatase (320 aa).

2 residues coordinate Fe cation: histidine 194 and glutamate 275.

This sequence belongs to the ferrochelatase family. In terms of assembly, monomer.

The protein localises to the cytoplasm. It catalyses the reaction heme b + 2 H(+) = protoporphyrin IX + Fe(2+). Its pathway is porphyrin-containing compound metabolism; protoheme biosynthesis; protoheme from protoporphyrin-IX: step 1/1. Functionally, catalyzes the ferrous insertion into protoporphyrin IX. The protein is Ferrochelatase of Escherichia coli O8 (strain IAI1).